Consider the following 473-residue polypeptide: UDP-N-acetylmuramate--L-alanine ligase (473 aa).

112–118 (GTHGKTT) provides a ligand contact to ATP.

It belongs to the MurCDEF family.

It is found in the cytoplasm. It carries out the reaction UDP-N-acetyl-alpha-D-muramate + L-alanine + ATP = UDP-N-acetyl-alpha-D-muramoyl-L-alanine + ADP + phosphate + H(+). It participates in cell wall biogenesis; peptidoglycan biosynthesis. Cell wall formation. This is UDP-N-acetylmuramate--L-alanine ligase from Nitrosomonas europaea (strain ATCC 19718 / CIP 103999 / KCTC 2705 / NBRC 14298).